A 150-amino-acid chain; its full sequence is Large ribosomal subunit protein bL9 (150 aa).

It belongs to the bacterial ribosomal protein bL9 family.

Its function is as follows. Binds to the 23S rRNA. This Limosilactobacillus reuteri (strain DSM 20016) (Lactobacillus reuteri) protein is Large ribosomal subunit protein bL9.